The following is a 327-amino-acid chain: MTPELLTVLLITGGILIFLAIFFTLVPIPLWISSLAAGVRVSIFTLVGMRLRRVTPSKIVNPLIKAVKAGINLNTNQLESHYLAGGNVDRVVNALIAAHRANIELSFERAAAIDLAGRNVLEAVQMSVNPKVIETPFIAGVAMNGIEVKAKARITVRANIDRLVGGAGEETVIARVGEGVISTIGSCQDQKEVLENPEMISRTVLAKGLDSGTAFEILSIDIADVDIGKNIGAVLQTDQAEADKNIAQAKAEERRAMAIASEQEMKSRVEEMRAKVVAAEAEVPLAIAEALRDGNFSVMDYANYLNVTADTKMRQAIGGQSSPNDTQ.

Helical transmembrane passes span 8–28 (VLLI…LVPI) and 29–49 (PLWI…LVGM).

This sequence belongs to the flotillin-like FloA family. As to quaternary structure, homooligomerizes.

Its subcellular location is the cell membrane. The protein resides in the membrane raft. Found in functional membrane microdomains (FMM) that may be equivalent to eukaryotic membrane rafts. FMMs are highly dynamic and increase in number as cells age. Flotillins are thought to be important factors in membrane fluidity. This Exiguobacterium sibiricum (strain DSM 17290 / CCUG 55495 / CIP 109462 / JCM 13490 / 255-15) protein is Flotillin-like protein FloA.